A 167-amino-acid polypeptide reads, in one-letter code: N-alpha-acetyltransferase (167 aa).

The N-acetyltransferase domain maps to 12–167; sequence FTLRNARMDD…EDAYLMARPL (156 aa). Y37 is a binding site for substrate. Residue H88 coordinates Zn(2+). Acetyl-CoA contacts are provided by residues 92–94 and 100–105; these read IAV and RKGIAT. Residue E127 participates in Zn(2+) binding. Acetyl-CoA is bound by residues N132 and 139-141; that span reads YEK. Y154 contacts substrate.

Belongs to the acetyltransferase family. ARD1 subfamily. In terms of assembly, homodimer.

It localises to the cytoplasm. It catalyses the reaction N-terminal L-alanyl-[protein] + acetyl-CoA = N-terminal N(alpha)-acetyl-L-alanyl-[protein] + CoA + H(+). The enzyme catalyses N-terminal L-seryl-[protein] + acetyl-CoA = N-terminal N(alpha)-acetyl-L-seryl-[protein] + CoA + H(+). The catalysed reaction is N-terminal L-methionyl-L-leucyl-[protein] + acetyl-CoA = N-terminal N(alpha)-acetyl-L-methionyl-L-leucyl-[protein] + CoA + H(+). It carries out the reaction N-terminal L-methionyl-L-glutamyl-[protein] + acetyl-CoA = N-terminal N(alpha)-acetyl-L-methionyl-L-glutamyl-[protein] + CoA + H(+). Displays alpha (N-terminal) acetyltransferase activity. Catalyzes the covalent attachment of an acetyl moiety from acetyl-CoA to the free alpha-amino group at the N-terminus of a protein. NAT is able to acetylate the alpha-amino group of methionine, alanine and serine N-terminal residue substrates, however it has a preference for Ser-N-terminal substrates. In Saccharolobus solfataricus (strain ATCC 35092 / DSM 1617 / JCM 11322 / P2) (Sulfolobus solfataricus), this protein is N-alpha-acetyltransferase.